Consider the following 156-residue polypeptide: ATP synthase subunit b 1 (156 aa).

The chain crosses the membrane as a helical span at residues 5–27 (FTLISQAMAFAIFIWFTVRFVWP).

Belongs to the ATPase B chain family. In terms of assembly, F-type ATPases have 2 components, F(1) - the catalytic core - and F(0) - the membrane proton channel. F(1) has five subunits: alpha(3), beta(3), gamma(1), delta(1), epsilon(1). F(0) has three main subunits: a(1), b(2) and c(10-14). The alpha and beta chains form an alternating ring which encloses part of the gamma chain. F(1) is attached to F(0) by a central stalk formed by the gamma and epsilon chains, while a peripheral stalk is formed by the delta and b chains.

The protein resides in the cell inner membrane. In terms of biological role, f(1)F(0) ATP synthase produces ATP from ADP in the presence of a proton or sodium gradient. F-type ATPases consist of two structural domains, F(1) containing the extramembraneous catalytic core and F(0) containing the membrane proton channel, linked together by a central stalk and a peripheral stalk. During catalysis, ATP synthesis in the catalytic domain of F(1) is coupled via a rotary mechanism of the central stalk subunits to proton translocation. Component of the F(0) channel, it forms part of the peripheral stalk, linking F(1) to F(0). This is ATP synthase subunit b 1 from Nitrosospira multiformis (strain ATCC 25196 / NCIMB 11849 / C 71).